Here is a 77-residue protein sequence, read N- to C-terminus: Fungal protease inhibitor F (77 aa).

The N-terminal stretch at 1 to 22 is a signal peptide; it reads MASKNLFVLFFIFALFAANIAA. 4 disulfide bridges follow: Cys25–Cys57, Cys36–Cys49, Cys40–Cys77, and Cys59–Cys71.

This sequence belongs to the protease inhibitor I40 family. As to expression, hemolymph.

It localises to the secreted. Its function is as follows. Highly specific for fungal protease and subtilisin. The sequence is that of Fungal protease inhibitor F from Bombyx mori (Silk moth).